Reading from the N-terminus, the 548-residue chain is Tyrosine-protein phosphatase non-receptor type 61F (548 aa).

Residues 1 to 525 lie on the Cytoplasmic side of the membrane; that stretch reads MSEQKTSGSG…KQLAAKKRRS (525 aa). The Tyrosine-protein phosphatase domain occupies 33 to 296; the sequence is FYKEICETCD…DFSYQAIIEG (264 aa). Residues 46–65 are disordered; sequence KEKQFSTSESERHTNRGLNR. Ser-83 is subject to Phosphoserine. Tyr-86 bears the Phosphotyrosine mark. Residues Asp-203, 237 to 243, and Gln-281 each bind substrate; that span reads CSAGIGR. Catalysis depends on Cys-237, which acts as the Phosphocysteine intermediate. 3 consecutive short sequence motifs (PXXP motif (SH3-binding)) follow at residues 327–330, 339–342, and 394–397; these read PPLP and PLAP. The segment at 386–517 is disordered; sequence EVADSRPLPP…RKQRENEDKQ (132 aa). Positions 404 to 428 are enriched in acidic residues; the sequence is SDSDEDYLLDDDDEDDTDEDEEYET. 2 short sequence motifs (PXXP motif (SH3-binding)) span residues 459 to 462 and 480 to 483; these read PAVP and PASP. Over residues 502-517 the composition is skewed to basic and acidic residues; it reads KVNDMKRKQRENEDKQ. A helical transmembrane segment spans residues 526-545; sequence LLTYIAAGVVVGVICAYAYT. Over 546-548 the chain is Extracellular; sequence KLG.

This sequence belongs to the protein-tyrosine phosphatase family. Non-receptor class 1 subfamily. In terms of assembly, interacts (via C-terminus) with dock/dreadlocks; this interaction is independent of insulin stimulation and is required for dephosphorylation of the insulin-like receptor InR.

The protein resides in the cytoplasm. It is found in the membrane. Its subcellular location is the endomembrane system. The protein localises to the nucleus. The enzyme catalyses O-phospho-L-tyrosyl-[protein] + H2O = L-tyrosyl-[protein] + phosphate. In terms of biological role, non-receptor protein tyrosine phosphatase. Required for maintaining dock/dreadlocks in its non-phosphorylated state. Negative regulator of InR/insulin-like receptor signaling through dephosphorylation of tyrosines when recruited by dock/dreadlocks. This chain is Tyrosine-protein phosphatase non-receptor type 61F, found in Drosophila melanogaster (Fruit fly).